The sequence spans 722 residues: Dynein axonemal intermediate chain 7 (722 aa).

Residues 1 to 15 (MGPKAKKSGSKKKKV) are compositionally biased toward basic residues. Residues 1–20 (MGPKAKKSGSKKKKVTKAER) are disordered.

This sequence belongs to the DNAI7 family. In terms of assembly, part of the multisubunit axonemal dynein complex formed at least of two heavy chains and a number of intermediate and light chains. Associates with tubulin. Interacts with microtubule. In terms of processing, ubiquitinated. Ubiquitination leads to its degradation through the 26S proteasome. Ubiquitin-proteasome-mediated DNAI7 degradation occurs in mitosis.

Its subcellular location is the cell projection. The protein resides in the cilium. It localises to the cytoplasm. Functionally, via its association with the multisubunit axonemal dynein complex, is potentially involved in the regulation of cilia function. May act as a cell cycle regulator. This is Dynein axonemal intermediate chain 7 from Macaca fascicularis (Crab-eating macaque).